A 274-amino-acid chain; its full sequence is Thymidylate synthase (274 aa).

R21 provides a ligand contact to dUMP. H51 contributes to the (6R)-5,10-methylene-5,6,7,8-tetrahydrofolate binding site. 123–124 (RR) contacts dUMP. The active-site Nucleophile is the C156. Residues 176-179 (RSAD), N187, and 217-219 (HIY) each bind dUMP. D179 contacts (6R)-5,10-methylene-5,6,7,8-tetrahydrofolate. S273 is a (6R)-5,10-methylene-5,6,7,8-tetrahydrofolate binding site.

It belongs to the thymidylate synthase family. Bacterial-type ThyA subfamily. In terms of assembly, homodimer.

The protein resides in the cytoplasm. The enzyme catalyses dUMP + (6R)-5,10-methylene-5,6,7,8-tetrahydrofolate = 7,8-dihydrofolate + dTMP. The protein operates within pyrimidine metabolism; dTTP biosynthesis. Catalyzes the reductive methylation of 2'-deoxyuridine-5'-monophosphate (dUMP) to 2'-deoxythymidine-5'-monophosphate (dTMP) while utilizing 5,10-methylenetetrahydrofolate (mTHF) as the methyl donor and reductant in the reaction, yielding dihydrofolate (DHF) as a by-product. This enzymatic reaction provides an intracellular de novo source of dTMP, an essential precursor for DNA biosynthesis. This Francisella tularensis subsp. tularensis (strain SCHU S4 / Schu 4) protein is Thymidylate synthase.